The primary structure comprises 107 residues: UPF0145 protein YbjQ (107 aa).

This sequence belongs to the UPF0145 family.

This is UPF0145 protein YbjQ from Salmonella gallinarum (strain 287/91 / NCTC 13346).